The sequence spans 420 residues: UDP-N-acetylglucosamine 1-carboxyvinyltransferase (420 aa).

Residue 22 to 23 coordinates phosphoenolpyruvate; that stretch reads KN. Arg-92 is a binding site for UDP-N-acetyl-alpha-D-glucosamine. Catalysis depends on Cys-116, which acts as the Proton donor. 2-(S-cysteinyl)pyruvic acid O-phosphothioketal is present on Cys-116. Residues 121 to 125, Asp-304, and Ile-326 each bind UDP-N-acetyl-alpha-D-glucosamine; that span reads RPVDQ.

It belongs to the EPSP synthase family. MurA subfamily.

It localises to the cytoplasm. The catalysed reaction is phosphoenolpyruvate + UDP-N-acetyl-alpha-D-glucosamine = UDP-N-acetyl-3-O-(1-carboxyvinyl)-alpha-D-glucosamine + phosphate. Its pathway is cell wall biogenesis; peptidoglycan biosynthesis. In terms of biological role, cell wall formation. Adds enolpyruvyl to UDP-N-acetylglucosamine. This chain is UDP-N-acetylglucosamine 1-carboxyvinyltransferase, found in Paraburkholderia xenovorans (strain LB400).